The sequence spans 115 residues: UPF0597 protein NTHI1023 (115 aa).

Belongs to the UPF0597 family.

The polypeptide is UPF0597 protein NTHI1023 (Haemophilus influenzae (strain 86-028NP)).